A 588-amino-acid polypeptide reads, in one-letter code: Aspartate--tRNA ligase (588 aa).

Glutamate 174 contributes to the L-aspartate binding site. Positions glutamine 198–lysine 201 are aspartate. Arginine 220 contacts L-aspartate. ATP-binding positions include arginine 220–glutamate 222 and glutamine 229. Residue histidine 448 participates in L-aspartate binding. Residue glutamate 482 participates in ATP binding. Arginine 489 serves as a coordination point for L-aspartate. Glycine 534–arginine 537 lines the ATP pocket.

The protein belongs to the class-II aminoacyl-tRNA synthetase family. Type 1 subfamily. Homodimer.

Its subcellular location is the cytoplasm. It carries out the reaction tRNA(Asp) + L-aspartate + ATP = L-aspartyl-tRNA(Asp) + AMP + diphosphate. Catalyzes the attachment of L-aspartate to tRNA(Asp) in a two-step reaction: L-aspartate is first activated by ATP to form Asp-AMP and then transferred to the acceptor end of tRNA(Asp). The chain is Aspartate--tRNA ligase from Exiguobacterium sibiricum (strain DSM 17290 / CCUG 55495 / CIP 109462 / JCM 13490 / 255-15).